The following is a 143-amino-acid chain: Ribonuclease H (143 aa).

An RNase H type-1 domain is found at 1 to 141 (MKHVEIFTDG…VDKLASDAAL (141 aa)). Asp9, Glu47, Asp69, and Asp133 together coordinate Mg(2+).

It belongs to the RNase H family. In terms of assembly, monomer. The cofactor is Mg(2+).

The protein resides in the cytoplasm. It catalyses the reaction Endonucleolytic cleavage to 5'-phosphomonoester.. In terms of biological role, endonuclease that specifically degrades the RNA of RNA-DNA hybrids. The chain is Ribonuclease H from Novosphingobium aromaticivorans (strain ATCC 700278 / DSM 12444 / CCUG 56034 / CIP 105152 / NBRC 16084 / F199).